The sequence spans 433 residues: Pyrimidine-nucleoside phosphorylase (433 aa).

81–83 (KHS) serves as a coordination point for phosphate. Residues Gly-88 and Thr-90 each contribute to the K(+) site. Phosphate-binding positions include Thr-92, 108-110 (KMS), and Thr-120. The substrate site is built by Arg-168 and Lys-187. K(+) is bound by residues Leu-243, Ala-246, and Glu-255.

The protein belongs to the thymidine/pyrimidine-nucleoside phosphorylase family. As to quaternary structure, homodimer. Requires K(+) as cofactor.

It carries out the reaction uridine + phosphate = alpha-D-ribose 1-phosphate + uracil. It catalyses the reaction thymidine + phosphate = 2-deoxy-alpha-D-ribose 1-phosphate + thymine. The catalysed reaction is 2'-deoxyuridine + phosphate = 2-deoxy-alpha-D-ribose 1-phosphate + uracil. In terms of biological role, catalyzes phosphorolysis of the pyrimidine nucleosides uridine, thymidine and 2'-deoxyuridine with the formation of the corresponding pyrimidine base and ribose-1-phosphate. This Staphylococcus aureus (strain NCTC 8325 / PS 47) protein is Pyrimidine-nucleoside phosphorylase (pdp).